The chain runs to 141 residues: uncharacterized protein (141 aa).

Belongs to the PhzA/PhzB family.

This is an uncharacterized protein from Pseudomonas aeruginosa (strain ATCC 15692 / DSM 22644 / CIP 104116 / JCM 14847 / LMG 12228 / 1C / PRS 101 / PAO1).